Here is a 354-residue protein sequence, read N- to C-terminus: Uroporphyrinogen decarboxylase (354 aa).

Substrate is bound by residues 27–31 (RQAGR), Asp-77, Tyr-154, Thr-209, and His-327.

It belongs to the uroporphyrinogen decarboxylase family. In terms of assembly, homodimer.

Its subcellular location is the cytoplasm. It catalyses the reaction uroporphyrinogen III + 4 H(+) = coproporphyrinogen III + 4 CO2. Its pathway is porphyrin-containing compound metabolism; protoporphyrin-IX biosynthesis; coproporphyrinogen-III from 5-aminolevulinate: step 4/4. Functionally, catalyzes the decarboxylation of four acetate groups of uroporphyrinogen-III to yield coproporphyrinogen-III. The sequence is that of Uroporphyrinogen decarboxylase from Shigella dysenteriae serotype 1 (strain Sd197).